A 127-amino-acid chain; its full sequence is Small ribosomal subunit protein uS12 (127 aa).

3-methylthioaspartic acid is present on aspartate 89.

This sequence belongs to the universal ribosomal protein uS12 family. Part of the 30S ribosomal subunit. Contacts proteins S8 and S17. May interact with IF1 in the 30S initiation complex.

With S4 and S5 plays an important role in translational accuracy. Functionally, interacts with and stabilizes bases of the 16S rRNA that are involved in tRNA selection in the A site and with the mRNA backbone. Located at the interface of the 30S and 50S subunits, it traverses the body of the 30S subunit contacting proteins on the other side and probably holding the rRNA structure together. The combined cluster of proteins S8, S12 and S17 appears to hold together the shoulder and platform of the 30S subunit. The chain is Small ribosomal subunit protein uS12 from Akkermansia muciniphila (strain ATCC BAA-835 / DSM 22959 / JCM 33894 / BCRC 81048 / CCUG 64013 / CIP 107961 / Muc).